We begin with the raw amino-acid sequence, 98 residues long: Large ribosomal subunit protein eL21 (98 aa).

The interval 1-22 (MVQMSEGFRRKTRKKLSKHPRE) is disordered. The segment covering 10-21 (RKTRKKLSKHPR) has biased composition (basic residues).

Belongs to the eukaryotic ribosomal protein eL21 family.

In Methanocaldococcus jannaschii (strain ATCC 43067 / DSM 2661 / JAL-1 / JCM 10045 / NBRC 100440) (Methanococcus jannaschii), this protein is Large ribosomal subunit protein eL21 (rpl21e).